The sequence spans 195 residues: Protein GrpE (195 aa).

Residues methionine 1–glutamine 24 show a composition bias toward polar residues. A disordered region spans residues methionine 1–glutamate 40.

This sequence belongs to the GrpE family. As to quaternary structure, homodimer.

The protein localises to the cytoplasm. Functionally, participates actively in the response to hyperosmotic and heat shock by preventing the aggregation of stress-denatured proteins, in association with DnaK and GrpE. It is the nucleotide exchange factor for DnaK and may function as a thermosensor. Unfolded proteins bind initially to DnaJ; upon interaction with the DnaJ-bound protein, DnaK hydrolyzes its bound ATP, resulting in the formation of a stable complex. GrpE releases ADP from DnaK; ATP binding to DnaK triggers the release of the substrate protein, thus completing the reaction cycle. Several rounds of ATP-dependent interactions between DnaJ, DnaK and GrpE are required for fully efficient folding. The chain is Protein GrpE from Sodalis glossinidius (strain morsitans).